The following is a 463-amino-acid chain: MSDQSKQKELLWQSRFSEPFDREALQFSSSVHVDGLLYREDIQGSIAHATMLGEEGIISAGESEQIVEGLKAVEKEIESGELVPVWEDEDIHTVIENRLKELIGPAAGKLHSGRSRNDQVATDTRLYLRRNIDRLVGLLEAMQSTLLDKAERYKSTIMFGYTHLQRAQPMSAGHYYMAWHSMFGRDAERLADLRKRANISPLGAAAFAGSTLPLNPARSAELLEFDGVFANSIDAVSDRDLVIEFVSACSMIMMHLSRFSEDVILWTSAEFNYLSISDAFATGSSIMPQKKNADIAELVRGKTGRVYGNLMNLLTIMKGLPLSYNRDMQEDKPPLFDTAETTASSLSVFRRMIEKTWLNEERLAKLTAEDLSLATEIAEYLVKKQIPFRDAHRITGKIVAYAIEKSKTLPTISLDEYRTFSESFDEGIYDDLKPDASVNSKKTAGSCSFKSVEEQIARARKNS.

Belongs to the lyase 1 family. Argininosuccinate lyase subfamily.

Its subcellular location is the cytoplasm. The catalysed reaction is 2-(N(omega)-L-arginino)succinate = fumarate + L-arginine. It functions in the pathway amino-acid biosynthesis; L-arginine biosynthesis; L-arginine from L-ornithine and carbamoyl phosphate: step 3/3. The protein is Argininosuccinate lyase of Chlorobaculum parvum (strain DSM 263 / NCIMB 8327) (Chlorobium vibrioforme subsp. thiosulfatophilum).